The chain runs to 351 residues: NAD-dependent protein deacetylase SIR2rp1 (351 aa).

A Deacetylase sirtuin-type domain is found at 10-325 (HVVGEPTFEG…RSFAQALGFG (316 aa)). NAD(+) is bound by residues 37–57 (GAGI…TGLY) and 122–125 (QNID). His-142 (proton acceptor) is an active-site residue. Residues Cys-150, Cys-153, Cys-174, and Cys-177 each contribute to the Zn(2+) site. NAD(+)-binding positions include 213-215 (GTS) and 238-240 (NLE). Positions 260–284 (SSYRLSTGNGNGSKISSGDSSNSSS) are disordered. Positions 265-284 (STGNGNGSKISSGDSSNSSS) are enriched in low complexity. Residue Cys-311 participates in NAD(+) binding.

This sequence belongs to the sirtuin family. Class I subfamily. Requires Zn(2+) as cofactor.

The protein resides in the nucleus. The protein localises to the chromosome. It is found in the telomere. The enzyme catalyses N(6)-acetyl-L-lysyl-[protein] + NAD(+) + H2O = 2''-O-acetyl-ADP-D-ribose + nicotinamide + L-lysyl-[protein]. In terms of biological role, NAD-dependent protein deacetylase, which is involved in repression of RNA polymerase I-mediated expression immediately adjacent to telomeres. It is however not involved in antigenic variation and subtelomeric variant surface glycoprotein (VSG) gene silencing. Plays a role in DNA damage response. Also has ADP-ribosylation activity in vitro. The polypeptide is NAD-dependent protein deacetylase SIR2rp1 (SIR2rp1) (Trypanosoma brucei brucei (strain 927/4 GUTat10.1)).